The chain runs to 285 residues: Bifunctional protein FolD (285 aa).

NADP(+)-binding positions include glycine 165–serine 167 and serine 190.

It belongs to the tetrahydrofolate dehydrogenase/cyclohydrolase family. Homodimer.

The enzyme catalyses (6R)-5,10-methylene-5,6,7,8-tetrahydrofolate + NADP(+) = (6R)-5,10-methenyltetrahydrofolate + NADPH. It carries out the reaction (6R)-5,10-methenyltetrahydrofolate + H2O = (6R)-10-formyltetrahydrofolate + H(+). It functions in the pathway one-carbon metabolism; tetrahydrofolate interconversion. Its function is as follows. Catalyzes the oxidation of 5,10-methylenetetrahydrofolate to 5,10-methenyltetrahydrofolate and then the hydrolysis of 5,10-methenyltetrahydrofolate to 10-formyltetrahydrofolate. This chain is Bifunctional protein FolD, found in Burkholderia multivorans (strain ATCC 17616 / 249).